The following is a 703-amino-acid chain: Methionine--tRNA ligase (703 aa).

Residues 15–25 (PYANGPVHLGH) carry the 'HIGH' region motif. Cys-147, Cys-150, Cys-160, and Cys-163 together coordinate Zn(2+). The short motif at 345–349 (KFSKS) is the 'KMSKS' region element. ATP is bound at residue Lys-348. Positions 602 to 703 (DFQKIDLRVA…GEGINGNSVS (102 aa)) constitute a tRNA-binding domain.

It belongs to the class-I aminoacyl-tRNA synthetase family. MetG type 1 subfamily. In terms of assembly, homodimer. It depends on Zn(2+) as a cofactor.

Its subcellular location is the cytoplasm. It carries out the reaction tRNA(Met) + L-methionine + ATP = L-methionyl-tRNA(Met) + AMP + diphosphate. Its function is as follows. Is required not only for elongation of protein synthesis but also for the initiation of all mRNA translation through initiator tRNA(fMet) aminoacylation. This chain is Methionine--tRNA ligase, found in Chlorobaculum tepidum (strain ATCC 49652 / DSM 12025 / NBRC 103806 / TLS) (Chlorobium tepidum).